Here is a 134-residue protein sequence, read N- to C-terminus: Phosphoribosyl-AMP cyclohydrolase (134 aa).

Residue D77 participates in Mg(2+) binding. C78 is a Zn(2+) binding site. Residues D79 and D81 each coordinate Mg(2+). Zn(2+) is bound by residues C95 and C102.

It belongs to the PRA-CH family. As to quaternary structure, homodimer. It depends on Mg(2+) as a cofactor. Zn(2+) is required as a cofactor.

Its subcellular location is the cytoplasm. The enzyme catalyses 1-(5-phospho-beta-D-ribosyl)-5'-AMP + H2O = 1-(5-phospho-beta-D-ribosyl)-5-[(5-phospho-beta-D-ribosylamino)methylideneamino]imidazole-4-carboxamide. Its pathway is amino-acid biosynthesis; L-histidine biosynthesis; L-histidine from 5-phospho-alpha-D-ribose 1-diphosphate: step 3/9. In terms of biological role, catalyzes the hydrolysis of the adenine ring of phosphoribosyl-AMP. This Pseudomonas aeruginosa (strain LESB58) protein is Phosphoribosyl-AMP cyclohydrolase.